The following is a 447-amino-acid chain: Tubulin beta-4 chain (447 aa).

Positions 11, 69, 138, 142, 143, 144, 204, and 226 each coordinate GTP. Glutamate 69 provides a ligand contact to Mg(2+). The disordered stretch occupies residues 423–447; it reads QQYQDATADEEGEYEDEEQQEADDM. Acidic residues predominate over residues 429–447; it reads TADEEGEYEDEEQQEADDM.

It belongs to the tubulin family. In terms of assembly, dimer of alpha and beta chains. A typical microtubule is a hollow water-filled tube with an outer diameter of 25 nm and an inner diameter of 15 nM. Alpha-beta heterodimers associate head-to-tail to form protofilaments running lengthwise along the microtubule wall with the beta-tubulin subunit facing the microtubule plus end conferring a structural polarity. Microtubules usually have 13 protofilaments but different protofilament numbers can be found in some organisms and specialized cells. Mg(2+) serves as cofactor. As to expression, expressed in roots and leaf sheaths.

The protein localises to the cytoplasm. Its subcellular location is the cytoskeleton. Functionally, tubulin is the major constituent of microtubules, a cylinder consisting of laterally associated linear protofilaments composed of alpha- and beta-tubulin heterodimers. Microtubules grow by the addition of GTP-tubulin dimers to the microtubule end, where a stabilizing cap forms. Below the cap, tubulin dimers are in GDP-bound state, owing to GTPase activity of alpha-tubulin. The protein is Tubulin beta-4 chain (TUBB4) of Oryza sativa subsp. japonica (Rice).